A 164-amino-acid chain; its full sequence is Decoration protein (164 aa).

Residues 1–72 form a binding to the capsid hexamer region; that stretch reads MIDYSGLRTI…AIPPAPPAPP (72 aa). The 94-residue stretch at 71-164 folds into the Ig-like domain; it reads PPLTLSKDLT…VTVNPTVPGG (94 aa).

As to quaternary structure, interacts with the major capsid protein; each hexon binds a single copy of the decoration protein.

It localises to the virion. Its function is as follows. Decoration protein that binds asymmetrically to the center of each capsid protein hexamer after capsid expansion. Stabilizes the capsid and protects from DNA release. In Escherichia phage T5 (Enterobacteria phage T5), this protein is Decoration protein.